The chain runs to 131 residues: Small ribosomal subunit protein uS8 (131 aa).

The protein belongs to the universal ribosomal protein uS8 family. Part of the 30S ribosomal subunit. Contacts proteins S5 and S12.

Its function is as follows. One of the primary rRNA binding proteins, it binds directly to 16S rRNA central domain where it helps coordinate assembly of the platform of the 30S subunit. The sequence is that of Small ribosomal subunit protein uS8 from Mesomycoplasma hyopneumoniae (strain 7448) (Mycoplasma hyopneumoniae).